Reading from the N-terminus, the 114-residue chain is Nucleoid-associated protein THEYE_A1069 (114 aa).

Belongs to the YbaB/EbfC family. In terms of assembly, homodimer.

It localises to the cytoplasm. The protein localises to the nucleoid. Binds to DNA and alters its conformation. May be involved in regulation of gene expression, nucleoid organization and DNA protection. The polypeptide is Nucleoid-associated protein THEYE_A1069 (Thermodesulfovibrio yellowstonii (strain ATCC 51303 / DSM 11347 / YP87)).